We begin with the raw amino-acid sequence, 449 residues long: Chromosomal replication initiator protein DnaA (449 aa).

Residues 1–83 form a domain I, interacts with DnaA modulators region; that stretch reads MDDSLWSACL…VELEIGSPPT (83 aa). The segment at 77–114 is disordered; it reads EIGSPPTPDQREAATGATRAAPAQRSSEPRQRPVDSNL. The interval 83–112 is domain II; that stretch reads TPDQREAATGATRAAPAQRSSEPRQRPVDS. Over residues 89–99 the composition is skewed to low complexity; that stretch reads AATGATRAAPA. The segment at 113-329 is domain III, AAA+ region; that stretch reads NLNPGFTFDS…GALRRITANA (217 aa). 4 residues coordinate ATP: Gly157, Gly159, Lys160, and Thr161. Residues 330–449 form a domain IV, binds dsDNA region; the sequence is QFTGRAIDVD…YDNLLRTLST (120 aa).

It belongs to the DnaA family. As to quaternary structure, oligomerizes as a right-handed, spiral filament on DNA at oriC.

Its subcellular location is the cytoplasm. Its function is as follows. Plays an essential role in the initiation and regulation of chromosomal replication. ATP-DnaA binds to the origin of replication (oriC) to initiate formation of the DNA replication initiation complex once per cell cycle. Binds the DnaA box (a 9 base pair repeat at the origin) and separates the double-stranded (ds)DNA. Forms a right-handed helical filament on oriC DNA; dsDNA binds to the exterior of the filament while single-stranded (ss)DNA is stabiized in the filament's interior. The ATP-DnaA-oriC complex binds and stabilizes one strand of the AT-rich DNA unwinding element (DUE), permitting loading of DNA polymerase. After initiation quickly degrades to an ADP-DnaA complex that is not apt for DNA replication. Binds acidic phospholipids. This Halorhodospira halophila (strain DSM 244 / SL1) (Ectothiorhodospira halophila (strain DSM 244 / SL1)) protein is Chromosomal replication initiator protein DnaA.